The following is a 338-amino-acid chain: UDP-N-acetylenolpyruvoylglucosamine reductase (338 aa).

The region spanning Ile17 to Lys188 is the FAD-binding PCMH-type domain. Arg164 is an active-site residue. Residue Ser237 is the Proton donor of the active site. The active site involves Glu333.

The protein belongs to the MurB family. FAD is required as a cofactor.

It is found in the cytoplasm. It catalyses the reaction UDP-N-acetyl-alpha-D-muramate + NADP(+) = UDP-N-acetyl-3-O-(1-carboxyvinyl)-alpha-D-glucosamine + NADPH + H(+). Its pathway is cell wall biogenesis; peptidoglycan biosynthesis. Its function is as follows. Cell wall formation. The protein is UDP-N-acetylenolpyruvoylglucosamine reductase of Porphyromonas gingivalis (strain ATCC BAA-308 / W83).